The primary structure comprises 82 residues: Polyketide biosynthesis acyl-carrier-protein AcpK (82 aa).

The Carrier domain occupies 4 to 79; it reads QRIFEVLITN…ELAEVLYDKV (76 aa). Ser-39 carries the O-(pantetheine 4'-phosphoryl)serine modification.

4'-phosphopantetheine is transferred from CoA to a specific serine of apo-ACP by sfp.

It is found in the cytoplasm. It participates in antibiotic biosynthesis; bacillaene biosynthesis. Involved in some intermediate steps for the synthesis of the antibiotic polyketide bacillaene which is involved in secondary metabolism. This chain is Polyketide biosynthesis acyl-carrier-protein AcpK (acpK), found in Bacillus subtilis (strain 168).